The sequence spans 89 residues: Small ribosomal subunit protein uS15 (89 aa).

Belongs to the universal ribosomal protein uS15 family. Part of the 30S ribosomal subunit. Forms a bridge to the 50S subunit in the 70S ribosome, contacting the 23S rRNA.

One of the primary rRNA binding proteins, it binds directly to 16S rRNA where it helps nucleate assembly of the platform of the 30S subunit by binding and bridging several RNA helices of the 16S rRNA. Its function is as follows. Forms an intersubunit bridge (bridge B4) with the 23S rRNA of the 50S subunit in the ribosome. This chain is Small ribosomal subunit protein uS15, found in Chlorobaculum tepidum (strain ATCC 49652 / DSM 12025 / NBRC 103806 / TLS) (Chlorobium tepidum).